A 578-amino-acid polypeptide reads, in one-letter code: Putative diflavin flavoprotein A 2 (578 aa).

Residues 48-240 (RHGTTYNSFL…LQVVLVATGH (193 aa)) form a zinc metallo-hydrolase region. His-97, Glu-99, Asp-101, His-164, Asp-183, and His-240 together coordinate Fe cation. The 138-residue stretch at 269–406 (VALFYVDGYG…LCREAGTDLG (138 aa)) folds into the Flavodoxin-like domain. The flavodoxin-reductase-like stretch occupies residues 429–578 (IGRLSTGLYI…THHRKLGNHY (150 aa)).

This sequence in the N-terminal section; belongs to the zinc metallo-hydrolase group 3 family. In the C-terminal section; belongs to the flavodoxin reductase family. The cofactor is Fe cation.

In terms of biological role, mediates electron transfer from NADH to oxygen, reducing it to water. This modular protein has 3 redox cofactors, in other organisms the same activity requires 2 or 3 proteins. The sequence is that of Putative diflavin flavoprotein A 2 (dfa2) from Synechocystis sp. (strain ATCC 27184 / PCC 6803 / Kazusa).